A 162-amino-acid chain; its full sequence is Succinate dehydrogenase assembly factor 2-A, mitochondrial (162 aa).

A mitochondrion-targeting transit peptide spans 1-23 (MLRQLRLTMDISGWIFLPWRRSM).

The protein belongs to the SDHAF2 family. Interacts with the flavoprotein subunit within the SDH catalytic dimer.

It is found in the mitochondrion matrix. In terms of biological role, plays an essential role in the assembly of succinate dehydrogenase (SDH), an enzyme complex (also referred to as respiratory complex II) that is a component of both the tricarboxylic acid (TCA) cycle and the mitochondrial electron transport chain, and which couples the oxidation of succinate to fumarate with the reduction of ubiquinone (coenzyme Q) to ubiquinol. Required for flavinylation (covalent attachment of FAD) of the flavoprotein subunit of the SDH catalytic dimer. The chain is Succinate dehydrogenase assembly factor 2-A, mitochondrial from Drosophila erecta (Fruit fly).